The following is a 78-amino-acid chain: Conotoxin 6 (78 aa).

The N-terminal stretch at 1 to 22 is a signal peptide; sequence MKLTCMMIVAVLFLTAWIFITA. A propeptide spanning residues 23–51 is cleaved from the precursor; it reads DNSRNGIENLPRMRRHEMKNPKASKLNKR. Cystine bridges form between Cys53-Cys69, Cys60-Cys73, and Cys68-Cys77.

Belongs to the conotoxin O1 superfamily. In terms of tissue distribution, expressed by the venom duct.

The protein localises to the secreted. The sequence is that of Conotoxin 6 from Conus imperialis (Imperial cone).